A 327-amino-acid chain; its full sequence is Glycerol-3-phosphate dehydrogenase [NAD(P)+] (327 aa).

The NADPH site is built by W16, R36, and K108. The sn-glycerol 3-phosphate site is built by K108, G136, and S138. A140 is an NADPH binding site. Sn-glycerol 3-phosphate is bound by residues K191, D244, S254, R255, and N256. The active-site Proton acceptor is K191. R255 provides a ligand contact to NADPH. The NADPH site is built by L274 and E276.

The protein belongs to the NAD-dependent glycerol-3-phosphate dehydrogenase family.

Its subcellular location is the cytoplasm. It carries out the reaction sn-glycerol 3-phosphate + NAD(+) = dihydroxyacetone phosphate + NADH + H(+). The enzyme catalyses sn-glycerol 3-phosphate + NADP(+) = dihydroxyacetone phosphate + NADPH + H(+). It functions in the pathway membrane lipid metabolism; glycerophospholipid metabolism. In terms of biological role, catalyzes the reduction of the glycolytic intermediate dihydroxyacetone phosphate (DHAP) to sn-glycerol 3-phosphate (G3P), the key precursor for phospholipid synthesis. This chain is Glycerol-3-phosphate dehydrogenase [NAD(P)+], found in Bradyrhizobium sp. (strain ORS 278).